A 416-amino-acid polypeptide reads, in one-letter code: Enterobactin exporter EntS (416 aa).

Residues 1–21 (MNKQSWLLNLSLLKTHPAFRA) are Cytoplasmic-facing. The chain crosses the membrane as a helical span at residues 22-42 (VFLARFISIVSLGLLGVAVPV). The Periplasmic segment spans residues 43–55 (QIQMMTHSTWQVG). A helical membrane pass occupies residues 56–76 (LSVTLTGGAMFVGLMVGGVLA). Residues 77–83 (DRYERKK) lie on the Cytoplasmic side of the membrane. Residues 84-104 (VILLARGTCGIGFIGLCLNAL) traverse the membrane as a helical segment. Over 105–109 (LPEPS) the chain is Periplasmic. The helical transmembrane segment at 110 to 130 (LLAIYLLGLWDGFFASLGVTA) threads the bilayer. At 131–156 (LLAATPALVGRENLMQAGAITMLTVR) the chain is on the cytoplasmic side. A helical transmembrane segment spans residues 157–177 (LGSVISPMIGGLLLATGGVAW). N178 is a topological domain (periplasmic). A helical membrane pass occupies residues 179-199 (YGLAAAGTFITLLPLLSLPAL). The Cytoplasmic portion of the chain corresponds to 200-218 (PPPPQPREHPLKSLLAGFR). The chain crosses the membrane as a helical span at residues 219 to 239 (FLLASPLVGGIALLGGLLTMA). Residues 240-256 (SAVRVLYPALADNWQMS) are Periplasmic-facing. Residues 257–277 (AAQIGFLYAAIPLGAAIGALT) traverse the membrane as a helical segment. The Cytoplasmic portion of the chain corresponds to 278 to 287 (SGKLAHSARP). Residues 288–307 (GLLMLLSTLGSFLAIGLFGL) form a helical membrane-spanning segment. Over 308–313 (MPMWIL) the chain is Periplasmic. Residues 314-336 (GVICLALFGWLSAVSSLLQYTML) traverse the membrane as a helical segment. The Cytoplasmic portion of the chain corresponds to 337-356 (QTQTPEAMLGRINGLWTAQN). Residues 357 to 377 (VTGDAIGAALLGGLGAMMTPV) form a helical membrane-spanning segment. Residue A378 is a topological domain, periplasmic. The chain crosses the membrane as a helical span at residues 379-399 (SASASGFGLLIIGVLLLLVLV). Over 400-416 (ELRRFRQTPPQVTASDS) the chain is Cytoplasmic.

The protein belongs to the major facilitator superfamily. EntS (TC 2.A.1.38) family.

It is found in the cell inner membrane. Functionally, component of an export pathway for enterobactin. The chain is Enterobactin exporter EntS from Escherichia coli O81 (strain ED1a).